A 302-amino-acid chain; its full sequence is Lysosomal thioesterase PPT2 (302 aa).

A signal peptide spans 1–27 (MLGLCGQRLPAAWVLLLLPFLPLLLLA). N-linked (GlcNAc...) asparagine glycosylation is present at Asn60. 2 cysteine pairs are disulfide-bonded: Cys109-Cys117 and Cys165-Cys176. Ser111 serves as the catalytic Nucleophile. Asn190 and Asn206 each carry an N-linked (GlcNAc...) asparagine glycan. Asp228 is a catalytic residue. Residue Asn245 is glycosylated (N-linked (GlcNAc...) asparagine). Cys276 and Cys296 are joined by a disulfide. Residue His283 is part of the active site. A glycan (N-linked (GlcNAc...) asparagine) is linked at Asn289.

It belongs to the palmitoyl-protein thioesterase family. Broadly expressed, with highest levels in skeletal muscle.

It localises to the lysosome. It catalyses the reaction hexadecanoyl-CoA + H2O = hexadecanoate + CoA + H(+). It carries out the reaction S-hexadecanoyl-N-acetylcysteamine + H2O = N-acetylcysteamine + hexadecanoate + H(+). Catalyzes the cleavage of thioester bonds from S-palmitoyl-CoA or S-palmitoyl-N-acetylcysteamine (unbranched structures) but does not have activity against palmitoylcysteine or palmitoylated proteins, branched structures or bulky head groups. Conversely, hydrolyzes both long and short chain fatty acyl-CoA substrate. In terms of biological role, catalytically inactive due to lack of active site His-283. In Homo sapiens (Human), this protein is Lysosomal thioesterase PPT2.